A 756-amino-acid chain; its full sequence is NADP-dependent malic enzyme (756 aa).

Positions 1-428 (MTEQLRQAAL…KLTQFVYKTS (428 aa)) are malic enzyme. The active-site Proton donor is the Tyr-39. The Proton acceptor role is filled by Lys-94. Positions 136, 137, and 162 each coordinate a divalent metal cation. Residues 195–198 (AGAA), Asn-288, and Asn-320 contribute to the NADP(+) site. The segment at 429–756 (LFMRPIFSQA…AYAAVKAQQE (328 aa)) is phosphate acetyltransferase.

This sequence in the N-terminal section; belongs to the malic enzymes family. The protein in the C-terminal section; belongs to the phosphate acetyltransferase and butyryltransferase family. The cofactor is Mg(2+). It depends on Mn(2+) as a cofactor.

It carries out the reaction (S)-malate + NADP(+) = pyruvate + CO2 + NADPH. The enzyme catalyses oxaloacetate + H(+) = pyruvate + CO2. In Haemophilus influenzae (strain ATCC 51907 / DSM 11121 / KW20 / Rd), this protein is NADP-dependent malic enzyme (maeB).